A 157-amino-acid chain; its full sequence is Small ribosomal subunit protein uS7 (157 aa).

It belongs to the universal ribosomal protein uS7 family. As to quaternary structure, part of the 30S ribosomal subunit. Contacts proteins S9 and S11.

One of the primary rRNA binding proteins, it binds directly to 16S rRNA where it nucleates assembly of the head domain of the 30S subunit. Is located at the subunit interface close to the decoding center, probably blocks exit of the E-site tRNA. This Blochmanniella floridana protein is Small ribosomal subunit protein uS7.